A 276-amino-acid chain; its full sequence is Rhomboid protease GlpG (276 aa).

6 consecutive transmembrane segments (helical) span residues Gly-94 to Val-114, Ala-142 to Gly-162, Leu-169 to Gln-189, Phe-192 to Trp-212, Leu-229 to Ile-249, and Ala-250 to Leu-270. Catalysis depends on Ser-201, which acts as the Nucleophile. His-254 is a catalytic residue.

It belongs to the peptidase S54 family.

Its subcellular location is the cell inner membrane. The enzyme catalyses Cleaves type-1 transmembrane domains using a catalytic dyad composed of serine and histidine that are contributed by different transmembrane domains.. Rhomboid-type serine protease that catalyzes intramembrane proteolysis. The protein is Rhomboid protease GlpG of Enterobacter sp. (strain 638).